Reading from the N-terminus, the 662-residue chain is UvrABC system protein B (662 aa).

Residues 25-411 (DGIIAGDKFQ…STRIVEQVIR (387 aa)) form the Helicase ATP-binding domain. An ATP-binding site is contributed by 38 to 45 (GVTGSGKT). The Beta-hairpin motif lies at 91 to 114 (YYDYYQPEAYVPARDLYIEKDASI). Residues 428-594 (QMEHIYGEVK…TIKKAIEDIL (167 aa)) enclose the Helicase C-terminal domain. Residues 625–660 (KKLIKKLEAQMAEYADMLMFEEAAVIRDKIEEVKRI) form the UVR domain.

Belongs to the UvrB family. Forms a heterotetramer with UvrA during the search for lesions. Interacts with UvrC in an incision complex.

The protein localises to the cytoplasm. The UvrABC repair system catalyzes the recognition and processing of DNA lesions. A damage recognition complex composed of 2 UvrA and 2 UvrB subunits scans DNA for abnormalities. Upon binding of the UvrA(2)B(2) complex to a putative damaged site, the DNA wraps around one UvrB monomer. DNA wrap is dependent on ATP binding by UvrB and probably causes local melting of the DNA helix, facilitating insertion of UvrB beta-hairpin between the DNA strands. Then UvrB probes one DNA strand for the presence of a lesion. If a lesion is found the UvrA subunits dissociate and the UvrB-DNA preincision complex is formed. This complex is subsequently bound by UvrC and the second UvrB is released. If no lesion is found, the DNA wraps around the other UvrB subunit that will check the other stand for damage. The protein is UvrABC system protein B of Treponema denticola (strain ATCC 35405 / DSM 14222 / CIP 103919 / JCM 8153 / KCTC 15104).